Consider the following 217-residue polypeptide: MSLATIAENYMMHNETQRAIVPYVPPPYAYANAPTLGGQAGEMESMSLGILNQAMSSTTGASGALKDEKAAFGAMAEALRDPEPIRQIKKHVGLRTLKHLKIELASMRRRYAILRVVILMSGCVTMATSMAGGLTIIDKDIYQDLNGDGWLSKTIHGLNLLCTTMLLAAGKISDKIQEEISRTKRDIAKIESYVSAASMSWSGDTSVPLKEVKYGDS.

The protein belongs to the orbivirus NS3 family.

May play a role in the release of virions from infected cells. The chain is Non-structural protein NS3 (Segment-10) from Camelus dromedarius (Dromedary).